Consider the following 409-residue polypeptide: Astacin-like metalloendopeptidase (409 aa).

A signal peptide spans 1 to 19; the sequence is MDLKMLLIFTAFLLPAVLG. A propeptide spanning residues 20 to 86 is cleaved from the precursor; sequence FPIQDNYENS…EGDIVPRRSR (67 aa). The segment covering 30–42 has biased composition (low complexity); it reads TATSESTQVTTEE. A disordered region spans residues 30–55; the sequence is TATSESTQVTTEESIYDSPSPTETDS. The region spanning 87–285 is the Peptidase M12A domain; sequence SAFNCRNCYW…AKINKLYNCS (199 aa). Disulfide bonds link C91-C94, C134-C284, C155-C175, C287-C313, and C339-C362. H183 contacts Zn(2+). The active site involves E184. Zn(2+) contacts are provided by H187 and H193. Residues 287-399 form the CUB domain; sequence CSTIIDAAFG…SGFQATFTSA (113 aa).

Requires Zn(2+) as cofactor.

The protein localises to the cytoplasm. Its subcellular location is the cell membrane. It localises to the cytoplasmic vesicle. The protein resides in the secretory vesicle. It is found in the cortical granule. Its function is as follows. Probable oocyte-specific oolemmal receptor involved in sperm and egg adhesion and fertilization. Protease which may play a role in the breaking down of the vitelline membrane (days 0-5) and possibly, in the digestion of the egg white (days 9-12). The polypeptide is Astacin-like metalloendopeptidase (Coturnix japonica (Japanese quail)).